Here is a 223-residue protein sequence, read N- to C-terminus: Large ribosomal subunit protein uL3 (223 aa).

The protein belongs to the universal ribosomal protein uL3 family. As to quaternary structure, part of the 50S ribosomal subunit. Forms a cluster with proteins L14 and L19.

Functionally, one of the primary rRNA binding proteins, it binds directly near the 3'-end of the 23S rRNA, where it nucleates assembly of the 50S subunit. In Nocardioides sp. (strain ATCC BAA-499 / JS614), this protein is Large ribosomal subunit protein uL3.